Here is a 146-residue protein sequence, read N- to C-terminus: SMR1 protein (146 aa).

Residues 1–22 (MKSLYLIFGLWILLACFQSGEG) form the signal peptide. 2 disordered regions span residues 23–43 (VRGP…TLPH) and 99–146 (TAPD…GGGK). Residues 109–139 (PPTQLHSTEQANTKTDAKISNTTATTQNSTD) show a composition bias toward polar residues. 2 N-linked (GlcNAc...) asparagine glycosylation sites follow: asparagine 129 and asparagine 136.

Post-translationally, several O-linked glycosylation sites might be present in the C-terminal part. Expressed predominantly in the acinar cells of the submandibular gland and to lesser extent in the prostate.

It is found in the secreted. Functionally, sialorphin may be involved in the modulation of mineral balance between at least four systems: kidney, bone, tooth and circulation. Submandibular gland peptide T is able to directly or indirectly down-regulate cardiovascular depression induced by septic shock (endotoxin stimuli), or anaphylactic challenge (nematode antigen sensitization). In terms of biological role, sialorphin is an endogenous inhibitor of neprilysin. Inhibits the breakdown of Met-enkephalin and substance P in isolated tissue from the dorsal zone of the rat spinal cord. Has an analgesic effect when administered to rats by intravenous injection. The sequence is that of SMR1 protein (Vcsa1) from Rattus norvegicus (Rat).